The primary structure comprises 548 residues: Synaptic vesicle 2-related protein (548 aa).

At 1–87 (MEEDLFQLRQ…GFGKFQWKLS (87 aa)) the chain is on the cytoplasmic side. Residues serine 25 and serine 31 each carry the phosphoserine modification. Residues 88-108 (VLTGLAWMADAMEMMILSILA) traverse the membrane as a helical segment. The Vesicular segment spans residues 109-122 (PQLHCEWRLPSWQV). A helical transmembrane segment spans residues 123-143 (ALLTSVVFVGMMSSSTLWGNI). Over 144-156 (SDQYGRKTGLKIS) the chain is Cytoplasmic. The chain crosses the membrane as a helical span at residues 157-177 (VLWTLYYGILSAFAPVYSWIL). The Vesicular portion of the chain corresponds to 178–180 (VLR). The helical transmembrane segment at 181 to 201 (GLVGFGIGGVPQSVTLYAEFL) threads the bilayer. The Cytoplasmic portion of the chain corresponds to 202 to 209 (PMKARAKC). Residues 210-230 (ILLIEVFWAIGTVFEVVLAVF) form a helical membrane-spanning segment. Topologically, residues 231–238 (VMPSLGWR) are vesicular. The helical transmembrane segment at 239–259 (WLLILSAVPLLLFAVLCFWLP) threads the bilayer. Over 260–316 (ESARYDVLSGNQEKAIATLKRIATENGAPMPLGKLIISRQEDRGKMRDLFTPHFRWT) the chain is Cytoplasmic. Residues 317 to 337 (TLLLWFIWFSNAFSYYGLVLL) traverse the membrane as a helical segment. The Vesicular segment spans residues 338-373 (TTELFQAGDVCGISSRKKAVEAKCSLACEYLSEEDY). Residues 374–394 (MDLLWTTLSEFPGVLVTLWII) traverse the membrane as a helical segment. Residues 395–401 (DRLGRKK) lie on the Cytoplasmic side of the membrane. Residues 402–422 (TMALCFVIFSFCSLLLFICVG) traverse the membrane as a helical segment. Residues 423–424 (RN) lie on the Vesicular side of the membrane. A helical membrane pass occupies residues 425 to 445 (VLTLLLFIARAFISGGFQAAY). At 446–457 (VYTPEVYPTATR) the chain is on the cytoplasmic side. Residues 458–478 (ALGLGTCSGMARVGALITPFI) traverse the membrane as a helical segment. Residues 479–489 (AQVMLESSVYL) lie on the Vesicular side of the membrane. A helical membrane pass occupies residues 490-510 (TLAVYSGCCLLAALASCFLPI). Residues 511 to 548 (ETKGRGLQESSHREWGQEMVGRGMHGADVTRSNSGSQE) are Cytoplasmic-facing. At serine 542 the chain carries Phosphoserine.

Belongs to the major facilitator superfamily.

Its subcellular location is the cytoplasmic vesicle. It localises to the secretory vesicle. The protein resides in the synaptic vesicle membrane. The chain is Synaptic vesicle 2-related protein (SVOP) from Pongo abelii (Sumatran orangutan).